We begin with the raw amino-acid sequence, 215 residues long: MSKFYDWFQERLEIQLIADDISAKYVPPHVNVFYCFGGMTLTCFLVQLATGFAMTFYYKPTTIEAFSSIQHIMTQVSFGWLIRSLHRWSASMMVLMMILHIFRVYLTGGFKKPRELTWITGVILAVLTVSFGVTGYSLPWDQVGYWACKIVTGVPEAIPVVGDNVVEILRGGTGVGQATLTRFYSLHTLFLPALSVIFLLAHFLMIRKQGISGPL.

The helical transmembrane segment at 32-52 (VFYCFGGMTLTCFLVQLATGF) threads the bilayer. A heme c-binding site is contributed by cysteine 35. Heme b contacts are provided by histidine 86 and histidine 100. 3 consecutive transmembrane segments (helical) span residues 90–110 (ASMMVLMMILHIFRVYLTGGF), 116–136 (LTWITGVILAVLTVSFGVTGY), and 186–206 (LHTLFLPALSVIFLLAHFLMI). Positions 187 and 202 each coordinate heme b.

Belongs to the cytochrome b family. PetB subfamily. The 4 large subunits of the cytochrome b6-f complex are cytochrome b6, subunit IV (17 kDa polypeptide, PetD), cytochrome f and the Rieske protein, while the 4 small subunits are PetG, PetL, PetM and PetN. The complex functions as a dimer. Heme b serves as cofactor. It depends on heme c as a cofactor.

Its subcellular location is the plastid. It localises to the chloroplast thylakoid membrane. Its function is as follows. Component of the cytochrome b6-f complex, which mediates electron transfer between photosystem II (PSII) and photosystem I (PSI), cyclic electron flow around PSI, and state transitions. In Cyanidium caldarium (Red alga), this protein is Cytochrome b6.